Consider the following 162-residue polypeptide: Toluate 1,2-dioxygenase subunit beta (162 aa).

This sequence belongs to the bacterial ring-hydroxylating dioxygenase beta subunit family. As to quaternary structure, this dioxygenase system consists of three proteins: the two subunits of the hydroxylase component (XylX and XylY), and an electron transfer component (XylZ).

The protein operates within xenobiotic degradation; toluene degradation. The polypeptide is Toluate 1,2-dioxygenase subunit beta (xylY) (Pseudomonas putida (Arthrobacter siderocapsulatus)).